The following is a 92-amino-acid chain: MANSPSAKKRAIQAEKRRSHNASLRSMVRTYIKNVVKAIDAKDLDKARAAYTAAVPVIDRMADKGIIHKNKAARHKSRLNGHIKALGEAAAA.

Residues 1–23 form a disordered region; that stretch reads MANSPSAKKRAIQAEKRRSHNAS.

Belongs to the bacterial ribosomal protein bS20 family.

In terms of biological role, binds directly to 16S ribosomal RNA. This is Small ribosomal subunit protein bS20 from Stutzerimonas stutzeri (strain A1501) (Pseudomonas stutzeri).